Reading from the N-terminus, the 260-residue chain is O-antigen export system permease protein RfbA (260 aa).

A run of 7 helical transmembrane segments spans residues 31–51 (FLGF…YVLL), 63–83 (FPFF…SVGG), 109–129 (VVVT…VLGM), 139–159 (VVLF…LTYI), 173–193 (IVSN…PLST), 201–221 (SLML…AIFY), and 229–249 (EPLM…SSIF). Residues 32–252 (LGFLWTFLNP…WAASSIFESR (221 aa)) form the ABC transmembrane type-2 domain.

Belongs to the ABC-2 integral membrane protein family.

The protein resides in the cell inner membrane. May form an ATP-driven O-antigen export apparatus, in association with RfbB. This Myxococcus xanthus protein is O-antigen export system permease protein RfbA (rfbA).